Consider the following 843-residue polypeptide: N-acetyltransferase ESCO1 (843 aa).

The tract at residues 1–78 (MSIQEKSKEN…SASCSADKTA (78 aa)) is disordered. Residues 18-28 (SEDENLEEEVE) are compositionally biased toward acidic residues. The span at 66-78 (STRSASCSADKTA) shows a compositional bias: polar residues. S202 carries the post-translational modification Phosphoserine. A disordered region spans residues 262–300 (NELRKSAHTQVSTSTKRPQIPLPLVPEHSDDQELEQAGK). Positions 269 to 278 (HTQVSTSTKR) are enriched in polar residues. K335 is covalently cross-linked (Glycyl lysine isopeptide (Lys-Gly) (interchain with G-Cter in SUMO2)). S415 carries the phosphoserine modification. The disordered stretch occupies residues 546-584 (DRTFPGSAPNQQHSVLSDEASINRKNRDVPPNHSQLKHD). The span at 566–584 (SINRKNRDVPPNHSQLKHD) shows a compositional bias: basic and acidic residues. A CCHH-type zinc finger spans residues 620–644 (VSCNICGMLYTASNPEDETQHLLFH). Acetyl-CoA is bound by residues 775 to 777 (IWV), 783 to 788 (RKKIAS), and 815 to 817 (TPD).

Belongs to the acetyltransferase family. ECO subfamily. As to quaternary structure, the subunit structure is controversial. Monomer. Homodimer. In terms of processing, phosphorylated during mitosis.

The protein localises to the nucleus. Its subcellular location is the chromosome. The enzyme catalyses L-lysyl-[protein] + acetyl-CoA = N(6)-acetyl-L-lysyl-[protein] + CoA + H(+). Its function is as follows. Acetyltransferase required for the establishment of sister chromatid cohesion. Couples the processes of cohesion and DNA replication to ensure that only sister chromatids become paired together. In contrast to the structural cohesins, the deposition and establishment factors are required only during S phase. Acts by mediating the acetylation of cohesin component SMC3. The sequence is that of N-acetyltransferase ESCO1 (Esco1) from Mus musculus (Mouse).